Here is a 153-residue protein sequence, read N- to C-terminus: MAREKVLELVKRVTLPVVQEAGLELVDVEYAKEGGRYYLRIFIDKPGGVRIEDCQHVSEKIDRLLDELDPIPQSYFLEVSSPGIDRPLKKAGDYIRFAGRLARVKTFSPVEGRRKFTGRIVGMHGEDVVMQVEGKEMSIPFKQIASARLEVEF.

The protein belongs to the RimP family.

The protein localises to the cytoplasm. Functionally, required for maturation of 30S ribosomal subunits. The polypeptide is Ribosome maturation factor RimP (Pelotomaculum thermopropionicum (strain DSM 13744 / JCM 10971 / SI)).